The chain runs to 130 residues: Small ribosomal subunit protein uS8B (130 aa).

This sequence belongs to the universal ribosomal protein uS8 family. In terms of assembly, component of the small ribosomal subunit (SSU). Mature yeast ribosomes consist of a small (40S) and a large (60S) subunit. The 40S small subunit contains 1 molecule of ribosomal RNA (18S rRNA) and 33 different proteins (encoded by 57 genes). The large 60S subunit contains 3 rRNA molecules (25S, 5.8S and 5S rRNA) and 46 different proteins (encoded by 81 genes).

It is found in the cytoplasm. Its function is as follows. Component of the ribosome, a large ribonucleoprotein complex responsible for the synthesis of proteins in the cell. The small ribosomal subunit (SSU) binds messenger RNAs (mRNAs) and translates the encoded message by selecting cognate aminoacyl-transfer RNA (tRNA) molecules. The large subunit (LSU) contains the ribosomal catalytic site termed the peptidyl transferase center (PTC), which catalyzes the formation of peptide bonds, thereby polymerizing the amino acids delivered by tRNAs into a polypeptide chain. The nascent polypeptides leave the ribosome through a tunnel in the LSU and interact with protein factors that function in enzymatic processing, targeting, and the membrane insertion of nascent chains at the exit of the ribosomal tunnel. The chain is Small ribosomal subunit protein uS8B from Saccharomyces cerevisiae (strain ATCC 204508 / S288c) (Baker's yeast).